The primary structure comprises 427 residues: Enolase (427 aa).

Gln163 is a binding site for (2R)-2-phosphoglycerate. The active-site Proton donor is the Glu205. Positions 242, 285, and 312 each coordinate Mg(2+). (2R)-2-phosphoglycerate-binding residues include Lys337, Arg366, Ser367, and Lys388. The active-site Proton acceptor is the Lys337.

It belongs to the enolase family. It depends on Mg(2+) as a cofactor.

It localises to the cytoplasm. The protein localises to the secreted. Its subcellular location is the cell surface. The catalysed reaction is (2R)-2-phosphoglycerate = phosphoenolpyruvate + H2O. It participates in carbohydrate degradation; glycolysis; pyruvate from D-glyceraldehyde 3-phosphate: step 4/5. Functionally, catalyzes the reversible conversion of 2-phosphoglycerate (2-PG) into phosphoenolpyruvate (PEP). It is essential for the degradation of carbohydrates via glycolysis. This chain is Enolase, found in Janthinobacterium sp. (strain Marseille) (Minibacterium massiliensis).